Reading from the N-terminus, the 279-residue chain is Proteasome subunit beta (279 aa).

Positions 1–56 (MASQAMSWRGEGERVVRDLAAASTSSFVEHLSQSRPDLLPFGQALPAGVLPQTPHA) are cleaved as a propeptide — removed in mature form; by autocatalysis. T57 functions as the Nucleophile in the catalytic mechanism.

The protein belongs to the peptidase T1B family. As to quaternary structure, the 20S proteasome core is composed of 14 alpha and 14 beta subunits that assemble into four stacked heptameric rings, resulting in a barrel-shaped structure. The two inner rings, each composed of seven catalytic beta subunits, are sandwiched by two outer rings, each composed of seven alpha subunits. The catalytic chamber with the active sites is on the inside of the barrel. Has a gated structure, the ends of the cylinder being occluded by the N-termini of the alpha-subunits. Is capped by the proteasome-associated ATPase, ARC.

Its subcellular location is the cytoplasm. It catalyses the reaction Cleavage of peptide bonds with very broad specificity.. The protein operates within protein degradation; proteasomal Pup-dependent pathway. Its activity is regulated as follows. The formation of the proteasomal ATPase ARC-20S proteasome complex, likely via the docking of the C-termini of ARC into the intersubunit pockets in the alpha-rings, may trigger opening of the gate for substrate entry. Interconversion between the open-gate and close-gate conformations leads to a dynamic regulation of the 20S proteasome proteolysis activity. Functionally, component of the proteasome core, a large protease complex with broad specificity involved in protein degradation. The protein is Proteasome subunit beta of Renibacterium salmoninarum (strain ATCC 33209 / DSM 20767 / JCM 11484 / NBRC 15589 / NCIMB 2235).